Consider the following 45-residue polypeptide: MTERHTAKDIRKNAPKGENPGQPEPLSGSKKVKKRNHVSQTNGEG.

Over residues 1 to 12 (MTERHTAKDIRK) the composition is skewed to basic and acidic residues. A disordered region spans residues 1-45 (MTERHTAKDIRKNAPKGENPGQPEPLSGSKKVKKRNHVSQTNGEG).

This sequence belongs to the SspP family.

Its subcellular location is the spore core. The chain is Small, acid-soluble spore protein P from Halalkalibacterium halodurans (strain ATCC BAA-125 / DSM 18197 / FERM 7344 / JCM 9153 / C-125) (Bacillus halodurans).